Reading from the N-terminus, the 198-residue chain is Recombination protein RecR (198 aa).

The C4-type zinc-finger motif lies at 57–72 (CSVCGHITDKDPCYIC). The 96-residue stretch at 80 to 175 (SVLCVVQESK…KVTRIAHGLP (96 aa)) folds into the Toprim domain.

The protein belongs to the RecR family.

May play a role in DNA repair. It seems to be involved in an RecBC-independent recombinational process of DNA repair. It may act with RecF and RecO. The chain is Recombination protein RecR from Listeria innocua serovar 6a (strain ATCC BAA-680 / CLIP 11262).